A 1475-amino-acid chain; its full sequence is Sterol 3-beta-glucosyltransferase (1475 aa).

2 disordered regions span residues 1–73 (MPPP…PPMF) and 94–218 (HDRF…EDDK). Residues 8 to 17 (LPLHGPAGAA) show a composition bias toward low complexity. The segment covering 30 to 40 (RVGKKLQKKRH) has biased composition (basic residues). Positions 108–118 (GPQRDSADRSH) are enriched in basic and acidic residues. Over residues 156–168 (EKHKRKISGHKLL) the composition is skewed to basic residues. The GRAM 1 domain occupies 270-315 (QDIFEFDQPEAVIEEYPCWLLQSVLLQGYMYITAKHICFYSYLPKK). Residues 318–413 (EVVKSGYLSK…WVKSLQRVIF (96 aa)) form the PH domain. 3 disordered regions span residues 492–541 (ARLK…TTNK), 594–636 (SSPR…MEEP), and 653–715 (QILR…PVTP). Residues 505-531 (QQQQQQHPMQPPMQASARSSMSGSRRA) show a composition bias toward low complexity. 2 stretches are compositionally biased toward polar residues: residues 621–634 (QQGSTDSYVQSSME) and 653–674 (QILRGSDVFQNPTMRRSGSASR). The segment covering 675–686 (TEVEKQQRRDPR) has biased composition (basic and acidic residues). Positions 798 to 901 (RFRAHFALPE…RDDCAVTLLQ (104 aa)) constitute a GRAM 2 domain. Residues serine 989, arginine 990, aspartate 992, alanine 1293, histidine 1295, histidine 1308, serine 1311, glycine 1312, threonine 1313, aspartate 1332, and glutamine 1333 each contribute to the UDP-alpha-D-glucose site. The interval 1413–1475 (IQVEPDEDEE…RVSPSQQSVA (63 aa)) is disordered. The span at 1416-1425 (EPDEDEESAE) shows a compositional bias: acidic residues.

Belongs to the glycosyltransferase 28 family.

It localises to the cytoplasm. The protein resides in the preautophagosomal structure membrane. It catalyses the reaction a sterol + UDP-alpha-D-glucose = a sterol 3-beta-D-glucoside + UDP + H(+). The enzyme catalyses ergosterol + UDP-alpha-D-glucose = ergosteryl 3-beta-D-glucoside + UDP + H(+). In terms of biological role, sterol glycosyltransferase responsible for the glycosylation of ergosterol to form ergosterol-glucoside. Mediates autophagic degradation of peroxisomes (pexophagy) and is involved in pathogenesis via peroxisome degradation inside appressoria that are developing into the host invasion stage. In Glomerella lagenarium (Anthracnose fungus), this protein is Sterol 3-beta-glucosyltransferase.